Consider the following 65-residue polypeptide: uncharacterized protein (65 aa).

Positions M1–D22 are disordered. Positions Q7–E17 are enriched in polar residues. Positions D22 to Y65 form a coiled coil.

This is an uncharacterized protein from Dictyostelium discoideum (Social amoeba).